The sequence spans 28 residues: Potassium channel toxin alpha-KTx 9.10 (28 aa).

3 disulfides stabilise this stretch: C3–C19, C6–C24, and C10–C26.

The protein belongs to the short scorpion toxin superfamily. Potassium channel inhibitor family. Alpha-KTx 09 subfamily. Expressed by the venom gland.

The protein resides in the secreted. Functionally, blocks Shaker potassium channels. This chain is Potassium channel toxin alpha-KTx 9.10, found in Mesobuthus eupeus (Lesser Asian scorpion).